The primary structure comprises 710 residues: F-box/WD repeat-containing protein 7 (710 aa).

A disordered region spans residues methionine 1–histidine 158. The residue at position 26 (serine 26) is a Phosphoserine. Positions arginine 46–arginine 55 are enriched in basic and acidic residues. Over residues glutamine 69–phenylalanine 84 the composition is skewed to polar residues. The span at valine 87–aspartate 132 shows a compositional bias: acidic residues. Positions aspartate 133–histidine 142 are enriched in basic and acidic residues. A compositionally biased stretch (polar residues) spans asparagine 143 to histidine 158. A Phosphothreonine modification is found at threonine 208. Serine 230 carries the post-translational modification Phosphoserine; by SGK1. An F-box domain is found at arginine 281–lysine 327. 7 WD repeats span residues glycine 381 to valine 421, histidine 423 to threonine 459, glycine 462 to methionine 501, histidine 503 to threonine 539, glycine 542 to threonine 581, histidine 583 to glutamine 621, and lysine 625 to asparagine 662.

Homodimer; homodimerization plays a role in substrate binding and/or ubiquitination and degradation. Component of the SCF(FBXW7) complex consisting of CUL1, RBX1, SKP1 and FBXW7. Interacts (via F-box domain) with SKP1. Interacts (via F-box domain) with pseudophosphatase STYX; the interaction is direct and prevents FBXW7 interaction with SKP1. Interacts with cyclin-E (CCNE1 or CCNE2). Interacts with PSEN1. Forms a trimeric complex with NOTCH1 and SGK1. Interacts with NOTCH1 intracellular domain/NICD and NOTCH4 intracellular domain/NICD. Interacts with NOTCH2 intracellular domain (N2ICD). Interacts with MYC (when phosphorylated). Interacts with USP28, counteracting ubiquitination of MYC. Interacts (when phosphorylated at Thr-208) with PIN1, disrupting FBXW7 dimerization and promoting FBXW7 autoubiquitination and degradation. Interacts with UBE2QL1. Interacts with FAM83D; promotes FBXW7 degradation. Interacts with MYCN; FBXW7 competes with AURKA for binding to unphosphorylated MYCN but not for binding to phosphorylated MYCN. Interacts with JUN. Found in a complex with JUN and PRR7. Interacts with JUN and PRR7; the interaction inhibits ubiquitination-mediated JUN degradation, promoting its phosphorylation and transcriptional activity. Interacts with NFE2L1. Interacts with NR1D1. Interacts with RICTOR; mediates RICTOR ubiquitination and degradation. Interacts with USP38, counteracting ubiquitination of MYC. Phosphorylation at Thr-208 promotes interaction with PIN1, leading to disrupt FBXW7 dimerization and promoting FBXW7 autoubiquitination and degradation. Phosphorylated by ATM at Ser-26 in response to DNA damage, promoting recruitment to DNA damage sites and 'Lys-63'-linked ubiquitination of phosphorylated XRCC4. In terms of processing, ubiquitinated: autoubiquitinates following phosphorylation at Thr-208 and subsequent interaction with PIN1. Ubiquitination leads to its proteasomal degradation. Widely expressed with highest levels in brain, heart and testis.

The protein localises to the nucleus. Its subcellular location is the nucleoplasm. It localises to the chromosome. It functions in the pathway protein modification; protein ubiquitination. Functionally, substrate recognition component of a SCF (SKP1-CUL1-F-box protein) E3 ubiquitin-protein ligase complex which mediates the ubiquitination and subsequent proteasomal degradation of target proteins. Recognizes and binds phosphorylated sites/phosphodegrons within target proteins and thereafter brings them to the SCF complex for ubiquitination. Mediates ubiquitination and subsequent degradation of CCNE1 and MYC. Identified substrates include cyclin-E (CCNE1 or CCNE2), DISC1, JUN, MYC, NOTCH1 released notch intracellular domain (NICD), NOTCH2, MCL1, MLST8, RICTOR and probably PSEN1. Acts as a negative regulator of JNK signaling by binding to phosphorylated JUN and promoting its ubiquitination and subsequent degradation. SCF(FBXW7) complex mediates the ubiquitination and subsequent degradation of NFE2L1. Involved in bone homeostasis and negative regulation of osteoclast differentiation. Regulates the amplitude of the cyclic expression of hepatic core clock genes and genes involved in lipid and glucose metabolism via ubiquitination and proteasomal degradation of their transcriptional repressor NR1D1; CDK1-dependent phosphorylation of NR1D1 is necessary for SCF(FBXW7)-mediated ubiquitination. Also able to promote 'Lys-63'-linked ubiquitination in response to DNA damage. The SCF(FBXW7) complex facilitates double-strand break repair following phosphorylation by ATM: phosphorylation promotes localization to sites of double-strand breaks and 'Lys-63'-linked ubiquitination of phosphorylated XRCC4, enhancing DNA non-homologous end joining. The polypeptide is F-box/WD repeat-containing protein 7 (Mus musculus (Mouse)).